The chain runs to 303 residues: Large ribosomal subunit protein uL18 (303 aa).

Belongs to the universal ribosomal protein uL18 family. In terms of assembly, component of the large ribosomal subunit (LSU).

Its subcellular location is the cytoplasm. The protein localises to the nucleus. Component of the ribosome, a large ribonucleoprotein complex responsible for the synthesis of proteins in the cell. The small ribosomal subunit (SSU) binds messenger RNAs (mRNAs) and translates the encoded message by selecting cognate aminoacyl-transfer RNA (tRNA) molecules. The large subunit (LSU) contains the ribosomal catalytic site termed the peptidyl transferase center (PTC), which catalyzes the formation of peptide bonds, thereby polymerizing the amino acids delivered by tRNAs into a polypeptide chain. The nascent polypeptides leave the ribosome through a tunnel in the LSU and interact with protein factors that function in enzymatic processing, targeting, and the membrane insertion of nascent chains at the exit of the ribosomal tunnel. The polypeptide is Large ribosomal subunit protein uL18 (RPL5) (Oikopleura dioica (Tunicate)).